Consider the following 333-residue polypeptide: cGAMP-activated phospholipase (333 aa).

Residues 10–191 form the PNPLA domain; the sequence is LALSGGGYRG…VGNAPGLFGL (182 aa). A GXGXXG motif is present at residues 14–19; sequence GGGYRG. The GXSXG signature appears at 46–50; sequence GTSAG. The active-site Nucleophile is Ser48. The active-site Proton acceptor is Asp178. The short motif at 178–180 is the DGA/G element; the sequence is DGG.

It belongs to the patatin family.

The enzyme catalyses a 1,2-diacyl-sn-glycero-3-phosphocholine + H2O = a 2-acyl-sn-glycero-3-phosphocholine + a fatty acid + H(+). The catalysed reaction is 1,2-di-(9Z-octadecenoyl)-sn-glycero-3-phosphoethanolamine + 2 H2O = sn-glycero-3-phosphoethanolamine + 2 (9Z)-octadecenoate + 2 H(+). With respect to regulation, phospholipase activity is specifically activated upon cGAMP binding, which is produced by the cognate cyclic nucleotide synthase encoded in the same operon. Is not activated by cyclic dinucleotides 2',3'-cGAMP, c-diAMP or 3',3'-c-diGMP. Effector phospholipase of a CBASS antiviral system. CBASS (cyclic oligonucleotide-based antiphage signaling system) provides immunity against bacteriophages. The CD-NTase protein (CdnA) synthesizes cyclic nucleotides in response to infection; these serve as specific second messenger signals. The signals activate a diverse range of effectors, leading to bacterial cell death and thus abortive phage infection. A type II-A(GA) CBASS system. Functionally, phospholipase that is activated upon binding to the cyclic dinucleotide (CDN) second messenger 3',3'-cyclic GMP-AMP (cGAMP). Degrades phospholipids in the cell membrane. Its function is as follows. The capV-cdnA-cap2-cap3 operon provides about 10(4)-fold protection in strain BWHPSA011 against infection by phage PaMx41. In P.aeruginosa strain PAO1 it confers protection against phages PaMx41 and JBD18 but not JBD67 (JBD18 and JBD67 do not replicate in BWHPSA011 / Pa011). When acb2 in JBD67 is deleted this CBASS operon then protects against JDB67 also. This CBASS system limits prophage induction of lysogenized JBD67 as well as viral lytic replication. The sequence is that of cGAMP-activated phospholipase from Pseudomonas aeruginosa (strain BWHPSA011 / Pa011).